The chain runs to 360 residues: Phospho-N-acetylmuramoyl-pentapeptide-transferase (360 aa).

A run of 10 helical transmembrane segments spans residues 21-41 (YVTFRAILGLMTALMFSLWWG), 74-94 (MGGLLILAGIFISVLLWGDLG), 97-117 (YVWVVLFVLASFGTIGFIDDY), 135-155 (LLQSIAAIVIAVYLYASADTA), 168-188 (VMPQLGAFFIVLVYFTIVGSS), 199-219 (GLAIMPTVMVAAAFALIAYLS), 236-256 (AGELVIVCTAIVGAGLGFLWF), 263-283 (VFMGDVGSLALGAALGAIAVL), 288-308 (ILLVIMGGVFVMETVSVILQV), and 338-358 (VIVRFWIISLFLVLLGLATLK).

It belongs to the glycosyltransferase 4 family. MraY subfamily. Requires Mg(2+) as cofactor.

The protein localises to the cell inner membrane. It catalyses the reaction UDP-N-acetyl-alpha-D-muramoyl-L-alanyl-gamma-D-glutamyl-meso-2,6-diaminopimeloyl-D-alanyl-D-alanine + di-trans,octa-cis-undecaprenyl phosphate = di-trans,octa-cis-undecaprenyl diphospho-N-acetyl-alpha-D-muramoyl-L-alanyl-D-glutamyl-meso-2,6-diaminopimeloyl-D-alanyl-D-alanine + UMP. Its pathway is cell wall biogenesis; peptidoglycan biosynthesis. Its function is as follows. Catalyzes the initial step of the lipid cycle reactions in the biosynthesis of the cell wall peptidoglycan: transfers peptidoglycan precursor phospho-MurNAc-pentapeptide from UDP-MurNAc-pentapeptide onto the lipid carrier undecaprenyl phosphate, yielding undecaprenyl-pyrophosphoryl-MurNAc-pentapeptide, known as lipid I. The protein is Phospho-N-acetylmuramoyl-pentapeptide-transferase of Shewanella piezotolerans (strain WP3 / JCM 13877).